Consider the following 437-residue polypeptide: Acyl-coenzyme A thioesterase 9, mitochondrial (437 aa).

The transit peptide at Met-1–Gly-21 directs the protein to the mitochondrion. 2 consecutive HotDog ACOT-type domains span residues Ser-84–Glu-207 and Glu-287–Val-399. Lys-101 bears the N6-acetyllysine mark.

Belongs to the acyl coenzyme A hydrolase family. Interacts with NYAP1, NYAP2 and MYO16.

The protein resides in the mitochondrion. The protein localises to the mitochondrion matrix. Its subcellular location is the mitochondrion inner membrane. The catalysed reaction is butanoyl-CoA + H2O = butanoate + CoA + H(+). It carries out the reaction propanoyl-CoA + H2O = propanoate + CoA + H(+). It catalyses the reaction hexadecanoyl-CoA + H2O = hexadecanoate + CoA + H(+). The enzyme catalyses octanoyl-CoA + H2O = octanoate + CoA + H(+). The catalysed reaction is decanoyl-CoA + H2O = decanoate + CoA + H(+). It carries out the reaction tetradecanoyl-CoA + H2O = tetradecanoate + CoA + H(+). It catalyses the reaction 4,8-dimethylnonanoyl-CoA + H2O = 4,8-dimethylnonanoate + CoA + H(+). The enzyme catalyses 3-methylbutanoyl-CoA + H2O = 3-methylbutanoate + CoA + H(+). The catalysed reaction is 2-methylpropanoyl-CoA + H2O = 2-methylpropanoate + CoA + H(+). Its pathway is lipid metabolism; fatty acid metabolism. Its activity is regulated as follows. Strongly inhibited by NADH and CoA. Mitochondrial acyl-CoA thioesterase. Catalyzes the hydrolysis of acyl-CoAs into free fatty acids and coenzyme A (CoA), regulating their respective intracellular levels. Regulates both mitochondrial lipid and amino acid metabolism. In Bos taurus (Bovine), this protein is Acyl-coenzyme A thioesterase 9, mitochondrial (ACOT9).